The sequence spans 281 residues: 2-dehydro-3-deoxyphosphooctonate aldolase (281 aa).

The protein belongs to the KdsA family.

It localises to the cytoplasm. It catalyses the reaction D-arabinose 5-phosphate + phosphoenolpyruvate + H2O = 3-deoxy-alpha-D-manno-2-octulosonate-8-phosphate + phosphate. It participates in carbohydrate biosynthesis; 3-deoxy-D-manno-octulosonate biosynthesis; 3-deoxy-D-manno-octulosonate from D-ribulose 5-phosphate: step 2/3. The protein operates within bacterial outer membrane biogenesis; lipopolysaccharide biosynthesis. This chain is 2-dehydro-3-deoxyphosphooctonate aldolase, found in Pseudomonas paraeruginosa (strain DSM 24068 / PA7) (Pseudomonas aeruginosa (strain PA7)).